Reading from the N-terminus, the 365-residue chain is Histidinol-phosphate aminotransferase (365 aa).

The interval 1–21 is disordered; sequence MSRPVPNPGILDIAPYTPGKS. K221 is modified (N6-(pyridoxal phosphate)lysine).

This sequence belongs to the class-II pyridoxal-phosphate-dependent aminotransferase family. Histidinol-phosphate aminotransferase subfamily. In terms of assembly, homodimer. Requires pyridoxal 5'-phosphate as cofactor.

It carries out the reaction L-histidinol phosphate + 2-oxoglutarate = 3-(imidazol-4-yl)-2-oxopropyl phosphate + L-glutamate. Its pathway is amino-acid biosynthesis; L-histidine biosynthesis; L-histidine from 5-phospho-alpha-D-ribose 1-diphosphate: step 7/9. This Rhodopseudomonas palustris (strain ATCC BAA-98 / CGA009) protein is Histidinol-phosphate aminotransferase.